Consider the following 449-residue polypeptide: UDP-N-acetylmuramoylalanine--D-glutamate ligase (449 aa).

Residue G118–T124 coordinates ATP.

This sequence belongs to the MurCDEF family.

Its subcellular location is the cytoplasm. The enzyme catalyses UDP-N-acetyl-alpha-D-muramoyl-L-alanine + D-glutamate + ATP = UDP-N-acetyl-alpha-D-muramoyl-L-alanyl-D-glutamate + ADP + phosphate + H(+). Its pathway is cell wall biogenesis; peptidoglycan biosynthesis. Its function is as follows. Cell wall formation. Catalyzes the addition of glutamate to the nucleotide precursor UDP-N-acetylmuramoyl-L-alanine (UMA). In Leuconostoc citreum (strain KM20), this protein is UDP-N-acetylmuramoylalanine--D-glutamate ligase.